Consider the following 903-residue polypeptide: Centrobin (903 aa).

Residues 1-10 (MATSADSPSS) are compositionally biased toward polar residues. Residues 1 to 34 (MATSADSPSSPLGAEDLLSDSSEPPGLNQVSSEV) are disordered. S80 is subject to Phosphoserine. 6 disordered regions span residues 110 to 140 (LQTS…DSDS), 471 to 493 (LRQA…GQHQ), 568 to 597 (LSTT…KEER), 669 to 704 (SALG…LPPA), 772 to 799 (RVPE…DGLT), and 837 to 903 (SGTD…GVWR). Positions 196 to 560 (RRKHCERHIQ…ERLQAMLQAH (365 aa)) form a coiled coil. Residues 365–903 (QEHQLKEHYQ…SMRSRGGVWR (539 aa)) are required for centrosome localization. A compositionally biased stretch (pro residues) spans 572 to 590 (LPPPNPPAPPAGPSSPGPQ). A compositionally biased stretch (basic and acidic residues) spans 675–685 (HPDHRAERPFP). Residues 778-791 (SSHSQGSGPSSGSP) are compositionally biased toward low complexity. S790 carries the post-translational modification Phosphoserine. Positions 837-863 (SGTDGRGDNVPRRNTDSRLGEIPRKEI) are enriched in basic and acidic residues.

Interacts with LYST. As to expression, widely expressed (at protein level). Highly expressed in testis. Also expressed in spleen, thymus, prostate, small intestine, colon and peripheral blood leukocytes.

It localises to the cytoplasm. Its subcellular location is the cytoskeleton. The protein localises to the microtubule organizing center. The protein resides in the centrosome. It is found in the centriole. In terms of biological role, required for centriole duplication. Inhibition of centriole duplication leading to defects in cytokinesis. This Homo sapiens (Human) protein is Centrobin (CNTROB).